The sequence spans 381 residues: Flap endonuclease 1 (381 aa).

An N-domain region spans residues 1–105 (MGVKGLNQLI…GELEKRLLKR (105 aa)). D34 provides a ligand contact to Mg(2+). Residues R47 and R71 each coordinate DNA. The Mg(2+) site is built by D87, E159, E161, D180, and D182. An I-domain region spans residues 123–254 (EVMKFEKRLV…VTAYKLIKEH (132 aa)). E159 contributes to the DNA binding site. DNA contacts are provided by G232 and D234. Position 234 (D234) interacts with Mg(2+). The interval 340–348 (VQGRLDGFF) is interaction with PCNA. The interval 354 to 381 (PGAKAGDKKGDKKRGSDSKASNNKKKRK) is disordered. Positions 358–370 (AGDKKGDKKRGSD) are enriched in basic and acidic residues.

It belongs to the XPG/RAD2 endonuclease family. FEN1 subfamily. As to quaternary structure, interacts with PCNA. Three molecules of FEN1 bind to one PCNA trimer with each molecule binding to one PCNA monomer. PCNA stimulates the nuclease activity without altering cleavage specificity. The cofactor is Mg(2+). In terms of processing, phosphorylated. Phosphorylation upon DNA damage induces relocalization to the nuclear plasma.

It is found in the nucleus. The protein resides in the nucleolus. Its subcellular location is the nucleoplasm. The protein localises to the mitochondrion. Its function is as follows. Structure-specific nuclease with 5'-flap endonuclease and 5'-3' exonuclease activities involved in DNA replication and repair. During DNA replication, cleaves the 5'-overhanging flap structure that is generated by displacement synthesis when DNA polymerase encounters the 5'-end of a downstream Okazaki fragment. It enters the flap from the 5'-end and then tracks to cleave the flap base, leaving a nick for ligation. Also involved in the long patch base excision repair (LP-BER) pathway, by cleaving within the apurinic/apyrimidinic (AP) site-terminated flap. Acts as a genome stabilization factor that prevents flaps from equilibrating into structures that lead to duplications and deletions. Also possesses 5'-3' exonuclease activity on nicked or gapped double-stranded DNA, and exhibits RNase H activity. Also involved in replication and repair of rDNA and in repairing mitochondrial DNA. This Scheffersomyces stipitis (strain ATCC 58785 / CBS 6054 / NBRC 10063 / NRRL Y-11545) (Yeast) protein is Flap endonuclease 1.